Here is a 197-residue protein sequence, read N- to C-terminus: Putative RNA-binding protein EEED8.12 (197 aa).

Residues 61 to 138 form the RRM domain; that stretch reads KSVFIGNVDF…RPIVVTAKRT (78 aa). Residues 142–166 are disordered; sequence GMGHGVRGSSRGTFGRGRGAARGAP.

This is Putative RNA-binding protein EEED8.12 from Caenorhabditis elegans.